The primary structure comprises 227 residues: Orotidine 5'-phosphate decarboxylase (227 aa).

Substrate contacts are provided by residues Asp8, Lys30, 58–67, Thr117, Arg177, Gln186, Gly206, and Arg207; that span reads DLKVHDIPNT. Lys60 serves as the catalytic Proton donor.

It belongs to the OMP decarboxylase family. Type 1 subfamily. Homodimer.

It catalyses the reaction orotidine 5'-phosphate + H(+) = UMP + CO2. It functions in the pathway pyrimidine metabolism; UMP biosynthesis via de novo pathway; UMP from orotate: step 2/2. Its function is as follows. Catalyzes the decarboxylation of orotidine 5'-monophosphate (OMP) to uridine 5'-monophosphate (UMP). The protein is Orotidine 5'-phosphate decarboxylase of Campylobacter fetus subsp. fetus (strain 82-40).